Here is a 315-residue protein sequence, read N- to C-terminus: Ribosomal RNA large subunit methyltransferase F (315 aa).

The protein belongs to the methyltransferase superfamily. METTL16/RlmF family.

It is found in the cytoplasm. The catalysed reaction is adenosine(1618) in 23S rRNA + S-adenosyl-L-methionine = N(6)-methyladenosine(1618) in 23S rRNA + S-adenosyl-L-homocysteine + H(+). Its function is as follows. Specifically methylates the adenine in position 1618 of 23S rRNA. The protein is Ribosomal RNA large subunit methyltransferase F of Aeromonas salmonicida (strain A449).